Consider the following 194-residue polypeptide: Thioredoxin O1, mitochondrial (194 aa).

The N-terminal 42 residues, 1 to 42 (MKGNWSIVRKVLHRQFSTLRSSTPSSRLSTSIRPLVLAPNSI), are a transit peptide targeting the mitochondrion. Serine 75 carries the post-translational modification Phosphoserine. Residues 89 to 194 (VKSEEEFINA…LKNLMEQLYK (106 aa)) enclose the Thioredoxin domain. Catalysis depends on nucleophile residues cysteine 118 and cysteine 121. Cysteine 118 and cysteine 121 form a disulfide bridge.

The protein belongs to the thioredoxin family. Plant O-type subfamily.

The protein resides in the mitochondrion matrix. Functionally, thiol-disulfide oxidoreductase that may participate in various redox reactions. Possesses insulin disulfide bonds reducing activity. Reduced by thioredoxin reductases NTRA and NTRB. The polypeptide is Thioredoxin O1, mitochondrial (Arabidopsis thaliana (Mouse-ear cress)).